The chain runs to 193 residues: 3-isopropylmalate dehydratase small subunit (193 aa).

This sequence belongs to the LeuD family. LeuD type 1 subfamily. In terms of assembly, heterodimer of LeuC and LeuD.

It carries out the reaction (2R,3S)-3-isopropylmalate = (2S)-2-isopropylmalate. It functions in the pathway amino-acid biosynthesis; L-leucine biosynthesis; L-leucine from 3-methyl-2-oxobutanoate: step 2/4. Functionally, catalyzes the isomerization between 2-isopropylmalate and 3-isopropylmalate, via the formation of 2-isopropylmaleate. The sequence is that of 3-isopropylmalate dehydratase small subunit from Bacillus cereus (strain B4264).